An 86-amino-acid chain; its full sequence is Putative membrane protein insertion efficiency factor (86 aa).

The disordered stretch occupies residues 66–86; the sequence is PLHEGGDDPVPPRKNDDNREN.

The protein belongs to the UPF0161 family.

The protein localises to the cell inner membrane. Could be involved in insertion of integral membrane proteins into the membrane. This is Putative membrane protein insertion efficiency factor from Proteus mirabilis (strain HI4320).